A 201-amino-acid chain; its full sequence is Probable chemoreceptor glutamine deamidase CheD 2 (201 aa).

Belongs to the CheD family.

The enzyme catalyses L-glutaminyl-[protein] + H2O = L-glutamyl-[protein] + NH4(+). In terms of biological role, probably deamidates glutamine residues to glutamate on methyl-accepting chemotaxis receptors (MCPs), playing an important role in chemotaxis. The polypeptide is Probable chemoreceptor glutamine deamidase CheD 2 (Chromobacterium violaceum (strain ATCC 12472 / DSM 30191 / JCM 1249 / CCUG 213 / NBRC 12614 / NCIMB 9131 / NCTC 9757 / MK)).